A 332-amino-acid polypeptide reads, in one-letter code: Holliday junction branch migration complex subunit RuvB (332 aa).

The segment at Met1 to Tyr181 is large ATPase domain (RuvB-L). ATP is bound by residues Leu20, Arg21, Gly62, Lys65, Thr66, Thr67, Glu128–Phe130, Arg171, Tyr181, and Arg218. Thr66 serves as a coordination point for Mg(2+). The segment at Gln182–Asp252 is small ATPAse domain (RuvB-S). Residues Arg255–Thr332 form a head domain (RuvB-H) region. 4 residues coordinate DNA: Arg291, Arg310, Arg312, and Arg315.

Belongs to the RuvB family. In terms of assembly, homohexamer. Forms an RuvA(8)-RuvB(12)-Holliday junction (HJ) complex. HJ DNA is sandwiched between 2 RuvA tetramers; dsDNA enters through RuvA and exits via RuvB. An RuvB hexamer assembles on each DNA strand where it exits the tetramer. Each RuvB hexamer is contacted by two RuvA subunits (via domain III) on 2 adjacent RuvB subunits; this complex drives branch migration. In the full resolvosome a probable DNA-RuvA(4)-RuvB(12)-RuvC(2) complex forms which resolves the HJ.

The protein localises to the cytoplasm. The catalysed reaction is ATP + H2O = ADP + phosphate + H(+). The RuvA-RuvB-RuvC complex processes Holliday junction (HJ) DNA during genetic recombination and DNA repair, while the RuvA-RuvB complex plays an important role in the rescue of blocked DNA replication forks via replication fork reversal (RFR). RuvA specifically binds to HJ cruciform DNA, conferring on it an open structure. The RuvB hexamer acts as an ATP-dependent pump, pulling dsDNA into and through the RuvAB complex. RuvB forms 2 homohexamers on either side of HJ DNA bound by 1 or 2 RuvA tetramers; 4 subunits per hexamer contact DNA at a time. Coordinated motions by a converter formed by DNA-disengaged RuvB subunits stimulates ATP hydrolysis and nucleotide exchange. Immobilization of the converter enables RuvB to convert the ATP-contained energy into a lever motion, pulling 2 nucleotides of DNA out of the RuvA tetramer per ATP hydrolyzed, thus driving DNA branch migration. The RuvB motors rotate together with the DNA substrate, which together with the progressing nucleotide cycle form the mechanistic basis for DNA recombination by continuous HJ branch migration. Branch migration allows RuvC to scan DNA until it finds its consensus sequence, where it cleaves and resolves cruciform DNA. This chain is Holliday junction branch migration complex subunit RuvB, found in Streptococcus pyogenes serotype M12 (strain MGAS9429).